We begin with the raw amino-acid sequence, 297 residues long: Ribosomal RNA small subunit methyltransferase H (297 aa).

S-adenosyl-L-methionine contacts are provided by residues 37–39, D56, F87, D102, and H109; that span reads GGH.

Belongs to the methyltransferase superfamily. RsmH family.

The protein localises to the cytoplasm. The enzyme catalyses cytidine(1402) in 16S rRNA + S-adenosyl-L-methionine = N(4)-methylcytidine(1402) in 16S rRNA + S-adenosyl-L-homocysteine + H(+). Specifically methylates the N4 position of cytidine in position 1402 (C1402) of 16S rRNA. The protein is Ribosomal RNA small subunit methyltransferase H of Borrelia turicatae (strain 91E135).